The chain runs to 194 residues: FMN-dependent NADH:quinone oxidoreductase 1 (194 aa).

FMN contacts are provided by residues Ser-9 and 85 to 88 (MYNF).

It belongs to the azoreductase type 1 family. In terms of assembly, homodimer. FMN is required as a cofactor.

The catalysed reaction is 2 a quinone + NADH + H(+) = 2 a 1,4-benzosemiquinone + NAD(+). It catalyses the reaction N,N-dimethyl-1,4-phenylenediamine + anthranilate + 2 NAD(+) = 2-(4-dimethylaminophenyl)diazenylbenzoate + 2 NADH + 2 H(+). Quinone reductase that provides resistance to thiol-specific stress caused by electrophilic quinones. In terms of biological role, also exhibits azoreductase activity. Catalyzes the reductive cleavage of the azo bond in aromatic azo compounds to the corresponding amines. The chain is FMN-dependent NADH:quinone oxidoreductase 1 from Xanthomonas euvesicatoria pv. vesicatoria (strain 85-10) (Xanthomonas campestris pv. vesicatoria).